Reading from the N-terminus, the 221-residue chain is uncharacterized protein (221 aa).

This is an uncharacterized protein from Sinorhizobium fredii (strain NBRC 101917 / NGR234).